Reading from the N-terminus, the 763-residue chain is Forkhead box protein M1 (763 aa).

The interval methionine 1–serine 53 is disordered. Residues proline 36 to glutamate 45 show a composition bias toward polar residues. Glycyl lysine isopeptide (Lys-Gly) (interchain with G-Cter in SUMO2) cross-links involve residues lysine 163, lysine 201, and lysine 325. The tract at residues arginine 198 to serine 232 is disordered. The span at isoleucine 200–serine 223 shows a compositional bias: basic and acidic residues. Positions glutamate 235 to leucine 327 form a DNA-binding region, fork-head. The disordered stretch occupies residues proline 329–arginine 351. The residue at position 331 (serine 331) is a Phosphoserine. Over residues glutamate 336 to arginine 351 the composition is skewed to basic and acidic residues. Lysine 356 participates in a covalent cross-link: Glycyl lysine isopeptide (Lys-Gly) (interchain with G-Cter in SUMO2). Residue serine 376 is modified to Phosphoserine; by CHEK2. Residues lysine 422 and lysine 440 each participate in a glycyl lysine isopeptide (Lys-Gly) (interchain with G-Cter in SUMO2) cross-link. The disordered stretch occupies residues proline 482–glycine 711. A Phosphoserine; by GSK3 modification is found at serine 489. Positions phenylalanine 494–glutamate 503 are enriched in basic and acidic residues. The residue at position 522 (serine 522) is a Phosphoserine. Over residues aspartate 583 to glutamine 592 the composition is skewed to polar residues. At threonine 611 the chain carries Phosphothreonine; by CDK1. Residues threonine 620, threonine 627, and threonine 662 each carry the phosphothreonine modification. Serine 693 is subject to Phosphoserine; by CDK1. 2 positions are modified to phosphoserine; by PLK1: serine 730 and serine 739.

Interacts with PINT87aa which is encoded by the circular form of the long non-coding RNA LINC-PINT; the interaction inhibits FOXM1-mediated transcription of PHB2. In terms of processing, phosphorylated in M (mitotic) phase. Phosphorylation by the checkpoint kinase CHEK2 in response to DNA damage increases the FOXM1 protein stability probably stimulating the transcription of genes involved in DNA repair. Phosphorylated by CDK1 in late S and G2 phases, creating docking sites for the POLO box domains of PLK1. Subsequently, PLK1 binds and phosphorylates FOXM1, leading to activation of transcriptional activity and subsequent enhanced expression of key mitotic regulators. Phosphorylated by GSK3B leading to ubiquitination and proteasomal degradation. Ubiquitinated in a FBXW7-dependent manner leading to proteasomal degradation. Expressed in thymus, testis, small intestine, colon followed by ovary. Appears to be expressed only in adult organs containing proliferating/cycling cells or in response to growth factors. Also expressed in epithelial cell lines derived from tumors. Not expressed in resting cells. Isoform 2 is highly expressed in testis.

The protein resides in the nucleus. Functionally, transcription factor regulating the expression of cell cycle genes essential for DNA replication and mitosis. Plays a role in the control of cell proliferation. Also plays a role in DNA break repair, participating in the DNA damage checkpoint response. Promotes transcription of PHB2. The chain is Forkhead box protein M1 (FOXM1) from Homo sapiens (Human).